A 240-amino-acid polypeptide reads, in one-letter code: Triosephosphate isomerase (240 aa).

A substrate-binding site is contributed by 6–8 (NLK). The active-site Electrophile is H88. The Proton acceptor role is filled by E157. Substrate-binding residues include G163 and S193.

It belongs to the triosephosphate isomerase family. Homodimer.

The protein resides in the cytoplasm. It carries out the reaction D-glyceraldehyde 3-phosphate = dihydroxyacetone phosphate. It participates in carbohydrate biosynthesis; gluconeogenesis. The protein operates within carbohydrate degradation; glycolysis; D-glyceraldehyde 3-phosphate from glycerone phosphate: step 1/1. In terms of biological role, involved in the gluconeogenesis. Catalyzes stereospecifically the conversion of dihydroxyacetone phosphate (DHAP) to D-glyceraldehyde-3-phosphate (G3P). The protein is Triosephosphate isomerase of Sulfurimonas denitrificans (strain ATCC 33889 / DSM 1251) (Thiomicrospira denitrificans (strain ATCC 33889 / DSM 1251)).